We begin with the raw amino-acid sequence, 496 residues long: Probable cytosol aminopeptidase (496 aa).

The Mn(2+) site is built by K266 and D271. K278 is a catalytic residue. Mn(2+)-binding residues include D289, D348, and E350. The active site involves R352.

It belongs to the peptidase M17 family. Mn(2+) serves as cofactor.

The protein resides in the cytoplasm. The enzyme catalyses Release of an N-terminal amino acid, Xaa-|-Yaa-, in which Xaa is preferably Leu, but may be other amino acids including Pro although not Arg or Lys, and Yaa may be Pro. Amino acid amides and methyl esters are also readily hydrolyzed, but rates on arylamides are exceedingly low.. The catalysed reaction is Release of an N-terminal amino acid, preferentially leucine, but not glutamic or aspartic acids.. Its function is as follows. Presumably involved in the processing and regular turnover of intracellular proteins. Catalyzes the removal of unsubstituted N-terminal amino acids from various peptides. The chain is Probable cytosol aminopeptidase from Pseudomonas syringae pv. syringae (strain B728a).